We begin with the raw amino-acid sequence, 114 residues long: Replication initiation control protein YabA (114 aa).

4 residues coordinate Zn(2+): His-84, Cys-86, Cys-102, and Cys-105.

This sequence belongs to the YabA family. In terms of assembly, homotetramer. Interacts with both DnaA and DnaN, acting as a bridge between these two proteins. Requires Zn(2+) as cofactor.

The protein resides in the cytoplasm. Its subcellular location is the nucleoid. Involved in control of chromosome replication initiation. Inhibits the cooperative binding of DnaA to the oriC region, thus negatively regulating initiation of chromosome replication. Inhibits the ability of DnaA-ATP to form a helix on DNA; does not disassemble preformed DnaA-DNA helices. Decreases the residence time of DnaA on the chromosome at its binding sites (oriC, replication forks and promoter-binding sites). Tethers DnaA to the replication machinery via the DNA polymerase beta sliding clamp subunit (dnaN). Associates with oriC and other DnaA targets on the chromosome in a DnaA-dependent manner. This Ligilactobacillus salivarius (strain UCC118) (Lactobacillus salivarius) protein is Replication initiation control protein YabA.